The sequence spans 171 residues: Adenine phosphoribosyltransferase (171 aa).

Belongs to the purine/pyrimidine phosphoribosyltransferase family. Homodimer.

Its subcellular location is the cytoplasm. It catalyses the reaction AMP + diphosphate = 5-phospho-alpha-D-ribose 1-diphosphate + adenine. It functions in the pathway purine metabolism; AMP biosynthesis via salvage pathway; AMP from adenine: step 1/1. Catalyzes a salvage reaction resulting in the formation of AMP, that is energically less costly than de novo synthesis. This chain is Adenine phosphoribosyltransferase, found in Natranaerobius thermophilus (strain ATCC BAA-1301 / DSM 18059 / JW/NM-WN-LF).